Here is a 780-residue protein sequence, read N- to C-terminus: Lon protease (780 aa).

Positions 11 to 204 constitute a Lon N-terminal domain; it reads IPVLPLRDVV…RLMAIMESEI (194 aa). Position 356 to 363 (356 to 363) interacts with ATP; the sequence is GPPGVGKT. A Lon proteolytic domain is found at 592-773; that stretch reads KNQIGQVIGL…KEVLNLSLEN (182 aa). Residues Ser679 and Lys722 contribute to the active site.

This sequence belongs to the peptidase S16 family. Homohexamer. Organized in a ring with a central cavity.

It localises to the cytoplasm. The enzyme catalyses Hydrolysis of proteins in presence of ATP.. Functionally, ATP-dependent serine protease that mediates the selective degradation of mutant and abnormal proteins as well as certain short-lived regulatory proteins. Required for cellular homeostasis and for survival from DNA damage and developmental changes induced by stress. Degrades polypeptides processively to yield small peptide fragments that are 5 to 10 amino acids long. Binds to DNA in a double-stranded, site-specific manner. In Buchnera aphidicola subsp. Baizongia pistaciae (strain Bp), this protein is Lon protease.